The following is a 1037-amino-acid chain: Glycine dehydrogenase (decarboxylating) 1, mitochondrial (1037 aa).

The N-terminal 67 residues, 1–67 (MERARRLAYR…AFGRHQQTRS (67 aa)), are a transit peptide targeting the mitochondrion. Cysteine 98 bears the S-glutathionyl cysteine; transient mark. An S-glutathionyl cysteine mark is found at cysteine 402 and cysteine 463. Lysine 774 is modified (N6-(pyridoxal phosphate)lysine). Cysteine 777, cysteine 943, and cysteine 1022 each carry S-glutathionyl cysteine; transient.

This sequence belongs to the GcvP family. In terms of assembly, homodimer. The glycine cleavage system is composed of four proteins: P, T, L and H. The cofactor is pyridoxal 5'-phosphate. Post-translationally, glutathionylated at Cys-98, Cys-777, Cys-943 and Cys-1022 after S-nitrosoglutathione treatment. In terms of processing, S-nitrosylated at unknown positions by nitric oxide. Expressed in leaves. Detected in roots, stems, flowers and siliques.

Its subcellular location is the mitochondrion. The catalysed reaction is N(6)-[(R)-lipoyl]-L-lysyl-[glycine-cleavage complex H protein] + glycine + H(+) = N(6)-[(R)-S(8)-aminomethyldihydrolipoyl]-L-lysyl-[glycine-cleavage complex H protein] + CO2. Inhibited by harpin, S-nitrosoglutathione (GSNO), nitric oxide, N-ethylmaleimide and 5,5'-dithiobis-(2-nitrobenzoic acid). In terms of biological role, the glycine decarboxylase (GDC) or glycine cleavage system catalyzes the degradation of glycine. The P protein binds the alpha-amino group of glycine through its pyridoxal phosphate cofactor; CO(2) is released and the remaining methylamine moiety is then transferred to the lipoamide cofactor of the H protein. The polypeptide is Glycine dehydrogenase (decarboxylating) 1, mitochondrial (GLDP1) (Arabidopsis thaliana (Mouse-ear cress)).